The primary structure comprises 330 residues: PDZ and LIM domain protein 4 (330 aa).

One can recognise a PDZ domain in the interval 1–84; it reads MTHSVTLRGP…HLTLSVSRPE (84 aa). 2 disordered regions span residues 104–153 and 219–242; these read DPES…SNEA and EAGEGGDRPGSGGPRNLKPAASKL. A phosphoserine mark is found at Ser-107, Ser-111, Ser-115, Ser-118, Ser-119, Ser-124, and Ser-134. Polar residues predominate over residues 108 to 122; sequence QDCSPATSRRSSVSG. The LIM zinc-binding domain maps to 255–305; sequence CTRCGHGIVGTIVKARDKLYHPECFMCSDCGLNLKQRGYFFLDERLYCENH.

Homodimer. Interacts (via C-terminus only or via combined C-terminus and LIM domain, but not LIM domain only) with PTPN13 (via the second or fourth PDZ domains). Found in a complex with PTPN13 and TRIP6. Interacts (via PDZ domain) with ACTN1 and ACTN2 (via C-terminal SDL residues). Interacts (via PDZ domain) with TRIP6 (via the second LIM domain or via the third LIM domain plus C-terminus). Interacts (via LIM domain) with GRIA1 (via C-terminus); this interaction as well as the interaction with alpha-actinin is required for their colocalization in early endosomes. Interacts with PDLIM1. Forms (via LIM domain) a heterodimer with PDLIM3. Interacts directly with SRC (via kinase domain and to a lesser extent the SH2 domain). Phosphorylated on tyrosine residue(s). Can be dephosphorylated by PTPN13. As to expression, expressed in several non-muscle tissues including lung, brain, ovary and uterus, and especially in epithelial cells at 14 dpc. In the uterus, high expression in the glandular epithelium, but absent in the simple columnar epithelium lining the uterus cavity.

It is found in the cytoplasm. Its subcellular location is the cytoskeleton. It localises to the cell projection. The protein resides in the dendritic spine. The protein localises to the early endosome membrane. It is found in the recycling endosome membrane. Its subcellular location is the nucleus. It localises to the perinuclear region. The protein resides in the lamellipodium. The protein localises to the synapse. It is found in the synaptosome. In terms of biological role, suppresses SRC activation by recognizing and binding to active SRC and facilitating PTPN13-mediated dephosphorylation of SRC 'Tyr-419' leading to its inactivation. Inactivated SRC dissociates from this protein allowing the initiation of a new SRC inactivation cycle. Involved in reorganization of the actin cytoskeleton. In nonmuscle cells, binds to ACTN1 (alpha-actinin-1), increases the affinity of ACTN1 to F-actin (filamentous actin), and promotes formation of actin stress fibers. Involved in regulation of the synaptic AMPA receptor transport in dendritic spines of hippocampal pyramidal neurons directing the receptors toward an insertion at the postsynaptic membrane. Links endosomal surface-internalized GRIA1-containing AMPA receptors to the alpha-actinin/actin cytoskeleton. Increases AMPA receptor-mediated excitatory postsynaptic currents in neurons. This Mus musculus (Mouse) protein is PDZ and LIM domain protein 4 (Pdlim4).